The sequence spans 210 residues: Large ribosomal subunit protein uL16 (210 aa).

The protein belongs to the universal ribosomal protein uL16 family. Component of the large ribosomal subunit. Mature ribosomes consist of a small (40S) and a large (60S) subunit. The 40S subunit contains about 33 different proteins and 1 molecule of RNA (18S). The 60S subunit contains about 49 different proteins and 3 molecules of RNA (28S, 5.8S and 5S).

The protein resides in the cytoplasm. Functionally, component of the large ribosomal subunit. Plays a role in the formation of actively translating ribosomes. (Microbial infection) Seems to bind to the leucine zipper of viral and cellular JUN. This chain is Large ribosomal subunit protein uL16, found in Gallus gallus (Chicken).